We begin with the raw amino-acid sequence, 415 residues long: Diaminopimelate decarboxylase (415 aa).

An N6-(pyridoxal phosphate)lysine modification is found at lysine 60. Residues glycine 239 and 274 to 277 each bind pyridoxal 5'-phosphate; that span reads EPGR. The substrate site is built by arginine 277, arginine 313, and tyrosine 317. Cysteine 344 (proton donor) is an active-site residue. 2 residues coordinate substrate: glutamate 345 and tyrosine 372. Tyrosine 372 provides a ligand contact to pyridoxal 5'-phosphate.

This sequence belongs to the Orn/Lys/Arg decarboxylase class-II family. LysA subfamily. As to quaternary structure, homodimer. It depends on pyridoxal 5'-phosphate as a cofactor.

The catalysed reaction is meso-2,6-diaminopimelate + H(+) = L-lysine + CO2. Its pathway is amino-acid biosynthesis; L-lysine biosynthesis via DAP pathway; L-lysine from DL-2,6-diaminopimelate: step 1/1. Functionally, specifically catalyzes the decarboxylation of meso-diaminopimelate (meso-DAP) to L-lysine. The protein is Diaminopimelate decarboxylase of Haemophilus influenzae (strain ATCC 51907 / DSM 11121 / KW20 / Rd).